The primary structure comprises 242 residues: Biosynthetic peptidoglycan transglycosylase (242 aa).

A helical membrane pass occupies residues 19-39; it reads LMVVLAIFWGGGIALFSVAPV.

Belongs to the glycosyltransferase 51 family.

Its subcellular location is the cell inner membrane. The enzyme catalyses [GlcNAc-(1-&gt;4)-Mur2Ac(oyl-L-Ala-gamma-D-Glu-L-Lys-D-Ala-D-Ala)](n)-di-trans,octa-cis-undecaprenyl diphosphate + beta-D-GlcNAc-(1-&gt;4)-Mur2Ac(oyl-L-Ala-gamma-D-Glu-L-Lys-D-Ala-D-Ala)-di-trans,octa-cis-undecaprenyl diphosphate = [GlcNAc-(1-&gt;4)-Mur2Ac(oyl-L-Ala-gamma-D-Glu-L-Lys-D-Ala-D-Ala)](n+1)-di-trans,octa-cis-undecaprenyl diphosphate + di-trans,octa-cis-undecaprenyl diphosphate + H(+). It participates in cell wall biogenesis; peptidoglycan biosynthesis. Peptidoglycan polymerase that catalyzes glycan chain elongation from lipid-linked precursors. This Escherichia coli O81 (strain ED1a) protein is Biosynthetic peptidoglycan transglycosylase.